A 1195-amino-acid polypeptide reads, in one-letter code: Phosphatidylinositol-3,5-bisphosphate 3-phosphatase MTMR4 (1195 aa).

S8 carries the post-translational modification Phosphoserine. The 418-residue stretch at 153–570 folds into the Myotubularin phosphatase domain; sequence EHIRCRQEAE…RALHLWTAVY (418 aa). A 1,2-diacyl-sn-glycero-3-phospho-(1D-myo-inositol-3,5-bisphosphate) contacts are provided by N320, N345, and I346. A 1,2-diacyl-sn-glycero-3-phospho-(1D-myo-inositol-3-phosphate) is bound by residues N320, N345, and I346. C407 functions as the Phosphocysteine intermediate in the catalytic mechanism. A 1,2-diacyl-sn-glycero-3-phospho-(1D-myo-inositol-3,5-bisphosphate) is bound by residues S408, D409, G410, W411, D412, R413, K449, and R453. Residues S408, D409, G410, W411, D412, and R413 each coordinate a 1,2-diacyl-sn-glycero-3-phospho-(1D-myo-inositol-3-phosphate). R453 serves as a coordination point for a 1,2-diacyl-sn-glycero-3-phospho-(1D-myo-inositol-3-phosphate). 2 positions are modified to phosphoserine: S610 and S629. 3 disordered regions span residues 645–756, 780–800, and 827–877; these read EPWH…EHCP, ESSQ…SMLG, and DPST…LLEN. The segment covering 720-729 has biased composition (basic and acidic residues); it reads PEIKVLEETK. Polar residues-rich tracts occupy residues 780–795 and 831–854; these read ESSQ…QAQP and DFLN…SSVP. The PY-motif; substrate motif for NEDD4 motif lies at 1004–1008; sequence VPPLY. A coiled-coil region spans residues 1023–1055; that stretch reads HRLRQIEAGYKQEVEQLRRQVRELQMRLDIRHC. The FYVE-type zinc-finger motif lies at 1114-1174; the sequence is DHMASHCYNC…VCNSCYEHIQ (61 aa). Residues C1120, C1123, C1136, C1139, C1144, C1147, C1166, and C1169 each coordinate Zn(2+).

The protein belongs to the protein-tyrosine phosphatase family. Non-receptor class myotubularin subfamily. As to quaternary structure, homooligomeric. Forms MTMR3:MTMR4 heterooligomers; regulates the localization of both proteins. The MTMR3:MTMR4 heterooligomer can also recruit both CEP55 and PLK1; occurs during early mitosis, regulates the phosphorylation of CEP55 by PLK1 and its recruitment to the midbody where it can mediate cell abscission. Interacts with SMAD2 and SMAD3; negatively regulates TGF-beta signaling through SMAD2 and SMAD3 dephosphorylation and retention in endosomes. Interacts with SMAD1; negatively regulates BMP signaling through SMAD1 dephosphorylation and retention in endosomes. Ubiquitinated. Ubiquitination by NEDD4 probably leads to proteasomal degradation. In terms of processing, phosphorylated by CDK1 during mitosis. Expressed in brain, heart, kidney, spleen, liver, colon, testis, muscle, placenta, thyroid gland, pancreas, ovary, prostate, skin, peripheral blood, and bone marrow.

It localises to the early endosome membrane. The protein resides in the recycling endosome membrane. It is found in the late endosome membrane. Its subcellular location is the cytoplasmic vesicle. The protein localises to the phagosome membrane. The catalysed reaction is a 1,2-diacyl-sn-glycero-3-phospho-(1D-myo-inositol-3-phosphate) + H2O = a 1,2-diacyl-sn-glycero-3-phospho-(1D-myo-inositol) + phosphate. It carries out the reaction a 1,2-diacyl-sn-glycero-3-phospho-(1D-myo-inositol-3,5-bisphosphate) + H2O = a 1,2-diacyl-sn-glycero-3-phospho-(1D-myo-inositol-5-phosphate) + phosphate. It catalyses the reaction 1,2-dioctanoyl-sn-glycero-3-phospho-(1-D-myo-inositol-3-phosphate) + H2O = 1,2-dioctanoyl-sn-glycero-3-phospho-(1D-myo-inositol) + phosphate. The enzyme catalyses 1,2-dioctanoyl-sn-glycero-3-phospho-(1D-myo-inositol-3,5-bisphosphate) + H2O = 1,2-dioctanoyl-sn-glycero-3-phospho-(1D-myo-inositol-5-phosphate) + phosphate. Its activity is regulated as follows. The phosphatidylinositol-3-phosphate phosphatase activity is inhibited by vanadate. Its function is as follows. Lipid phosphatase that specifically dephosphorylates the D-3 position of phosphatidylinositol 3-phosphate and phosphatidylinositol 3,5-bisphosphate, generating phosphatidylinositol and phosphatidylinositol 5-phosphate. Decreases the levels of phosphatidylinositol 3-phosphate, a phospholipid found in cell membranes where it acts as key regulator of both cell signaling and intracellular membrane traffic, in a subset of endosomal membranes to negatively regulate both endocytic recycling and trafficking and/or maturation of endosomes toward lysosomes. Through phosphatidylinositol 3-phosphate turnover in phagosome membranes regulates phagocytosis and phagosome maturation. By decreasing phosphatidylinositol 3-monophosphate (PI3P) levels in immune cells it can also regulate the innate immune response. Beside its lipid phosphatase activity, can also function as a molecular adapter to regulate midbody abscission during mitotic cytokinesis. Can also negatively regulate TGF-beta and BMP signaling through Smad proteins dephosphorylation and retention in endosomes. In Homo sapiens (Human), this protein is Phosphatidylinositol-3,5-bisphosphate 3-phosphatase MTMR4.